A 461-amino-acid polypeptide reads, in one-letter code: D-phenylhydantoinase (461 aa).

His59, His61, and Lys151 together coordinate a divalent metal cation. Lys151 carries the N6-carboxylysine modification. Substrate is bound at residue Tyr156. A divalent metal cation is bound by residues His182 and His239. A substrate-binding site is contributed by Ser286. An a divalent metal cation-binding site is contributed by Asp313. Asn335 contacts substrate.

This sequence belongs to the metallo-dependent hydrolases superfamily. Hydantoinase/dihydropyrimidinase family. Homotetramer. It depends on a divalent metal cation as a cofactor. In terms of processing, carboxylation allows a single lysine to coordinate two divalent metal cations.

The catalysed reaction is D-5-phenylhydantoin + H2O = N-carbamoyl-D-phenylglycine + H(+). Functionally, catalyzes the stereospecific hydrolysis of the cyclic amide bond of D-hydantoin derivatives with an aromatic side chains at the 5'-position. Has no activity on dihydropyrimidines. The physiological function is unknown. The sequence is that of D-phenylhydantoinase from Escherichia coli O6:K15:H31 (strain 536 / UPEC).